The primary structure comprises 98 residues: MAPKKTTKKGGPKKRPSAEKRILTAQKRNLINQSFKSKAKTMMKKFEAALKAGDQTSISSGLQLVYSVADKAVKRGVFKSNKAARIKARATLRANAKV.

A compositionally biased stretch (basic residues) spans 1–15 (MAPKKTTKKGGPKKR). A disordered region spans residues 1 to 21 (MAPKKTTKKGGPKKRPSAEKR).

It belongs to the bacterial ribosomal protein bS20 family.

Functionally, binds directly to 16S ribosomal RNA. This is Small ribosomal subunit protein bS20 from Chlamydia felis (strain Fe/C-56) (Chlamydophila felis).